A 1292-amino-acid polypeptide reads, in one-letter code: Kinesin-like protein KIN-12A (1292 aa).

Residues 1–86 (MKKHFTLPRN…LSAETATESG (86 aa)) form a disordered region. Residues 19–29 (PHSPNPSISKS) show a composition bias toward low complexity. The span at 62 to 71 (PLPPRPPPSN) shows a compositional bias: pro residues. The Kinesin motor domain maps to 91-426 (GVKVIVRMKP…LRFAQRAKAI (336 aa)). 165–172 (GQTGSGKT) lines the ATP pocket. Microtubules-binding stretches follow at residues 293–297 (SSRSH), 326–332 (VDLAGSE), and 375–379 (HIPYR). Positions 424–461 (KAIQNKAVVNEVMQDDVNFLRGVIHQLRDELQRMKNDG) are neck. Residues 677–724 (SVSPTIRNSRKSLKTSELSTASQKDSEGENLVTEAADPSPATSKKMNN) form a disordered region. 2 coiled-coil regions span residues 945–992 (EVLK…CYID) and 1047–1232 (SEEL…NQLV).

Belongs to the TRAFAC class myosin-kinesin ATPase superfamily. Kinesin family. KIN-12 subfamily. As to quaternary structure, homodimer and heterodimer with KIN12B. Interacts with TIO.

Its subcellular location is the cytoplasm. The protein localises to the cytoskeleton. It is found in the phragmoplast. In terms of biological role, plus-end directed kinesin-like motor enzyme that plays a critical role in the organization of phragmoplast microtubules during cytokinesis. Constitutes a signaling module in association with serine/threonine-protein kinase TIO that is required to support phragmoplast expansion and cell-plate growth in plant cells. Binds microtubules in an ATP-sensitive manner. This Arabidopsis thaliana (Mouse-ear cress) protein is Kinesin-like protein KIN-12A.